A 573-amino-acid polypeptide reads, in one-letter code: Developmental and secondary metabolism regulator veA (573 aa).

Residues 1 to 11 (MATLAAPPPPL) show a composition bias toward pro residues. Disordered stretches follow at residues 1–24 (MATL…SRIT) and 39–63 (QPKR…DPPP). The Velvet domain occupies 27-230 (GKKITYKLNI…AEQGCRVRIR (204 aa)). Positions 41-46 (KRARAC) match the Nuclear localization signal motif. A phosphothreonine mark is found at Thr167 and Thr170. Phosphoserine is present on Ser183. 3 disordered regions span residues 236–295 (RRRG…RRPS), 307–367 (YQRP…SYQS), and 384–573 (SHIP…ATMR). A compositionally biased stretch (basic and acidic residues) spans 241 to 260 (KRTEDYDYDNERGYNNRRPD). Tyr254 is subject to Phosphotyrosine. Composition is skewed to pro residues over residues 318 to 339 (SSTP…PSTP) and 347 to 361 (PAPP…PPLH). Over residues 387 to 412 (PQQTTTPTHPYSPRSSISHSRNQSIS) the composition is skewed to low complexity. Residues 452 to 493 (PSVNSRSKTPSNMITSLPPIQSLSELPSTTSQPSSAIGSSPA) show a composition bias toward polar residues. A PEST region spans residues 459-498 (KTPSNMITSLPPIQSLSELPSTTSQPSSAIGSSPANEPGP). Basic and acidic residues predominate over residues 510–522 (RTYEESFGHDDRP).

It belongs to the velvet family. VeA subfamily. Component of the heterotrimeric velvet complex composed of laeA, veA and velB; VeA acting as a bridging protein between laeA and velB. Interacts with the light-sensing phytochrome fphA. Interacts with llmF. Phosphorylated at Thr-167, Thr-170, Ser-183 and Tyr-254. Thr-167 should be phosphorylated and T170 and S183 should be dephosphorylated to achieve light induction of conidiation. Phosphorylation of Ser-183 and Tyr-254 influence sterigmatocystin production in a light-independent manner. Phosphorylation of Thr-167 and Thr-170 modulates expression of veA.

It localises to the nucleus. The protein resides in the cytoplasm. Functionally, component of the velvet transcription factor complex that controls sexual/asexual developmental ratio in response to light, promoting sexual development in the darkness while stimulating asexual sporulation under illumination. The velvet complex acts as a global regulator for secondary metabolite gene expression. Controls the expression of the sterigmatocystin and penicillin gene clusters. Represses the cryptic ors gene cluster producing orsellinic acid and its F9775 derivatives in a laeA-independent manner. Required for full induction of faoA gene expression by fructosyl amines. Positively regulates the expression of the early sexual development gene esdC. Controls the expression of mannoprotein mnpA. This is Developmental and secondary metabolism regulator veA from Emericella nidulans (strain FGSC A4 / ATCC 38163 / CBS 112.46 / NRRL 194 / M139) (Aspergillus nidulans).